The following is a 378-amino-acid chain: Queuine tRNA-ribosyltransferase (378 aa).

Residue aspartate 90 is the Proton acceptor of the active site. Residues 90–94 (DSGGY), aspartate 152, glutamine 194, and glycine 223 each bind substrate. Residues 254–260 (GVGKPED) form an RNA binding region. The Nucleophile role is filled by aspartate 273. The segment at 278-282 (TRNAR) is RNA binding; important for wobble base 34 recognition. Residues cysteine 311, cysteine 313, cysteine 316, and histidine 342 each contribute to the Zn(2+) site.

This sequence belongs to the queuine tRNA-ribosyltransferase family. In terms of assembly, homodimer. Within each dimer, one monomer is responsible for RNA recognition and catalysis, while the other monomer binds to the replacement base PreQ1. Zn(2+) is required as a cofactor.

It carries out the reaction 7-aminomethyl-7-carbaguanine + guanosine(34) in tRNA = 7-aminomethyl-7-carbaguanosine(34) in tRNA + guanine. The protein operates within tRNA modification; tRNA-queuosine biosynthesis. Catalyzes the base-exchange of a guanine (G) residue with the queuine precursor 7-aminomethyl-7-deazaguanine (PreQ1) at position 34 (anticodon wobble position) in tRNAs with GU(N) anticodons (tRNA-Asp, -Asn, -His and -Tyr). Catalysis occurs through a double-displacement mechanism. The nucleophile active site attacks the C1' of nucleotide 34 to detach the guanine base from the RNA, forming a covalent enzyme-RNA intermediate. The proton acceptor active site deprotonates the incoming PreQ1, allowing a nucleophilic attack on the C1' of the ribose to form the product. After dissociation, two additional enzymatic reactions on the tRNA convert PreQ1 to queuine (Q), resulting in the hypermodified nucleoside queuosine (7-(((4,5-cis-dihydroxy-2-cyclopenten-1-yl)amino)methyl)-7-deazaguanosine). This Aquifex aeolicus (strain VF5) protein is Queuine tRNA-ribosyltransferase.